Consider the following 199-residue polypeptide: Thymidine kinase (199 aa).

ATP contacts are provided by residues 15–22 (GSMFSGKS) and 88–91 (DEVQ). Glutamate 89 acts as the Proton acceptor in catalysis. Cysteine 145, cysteine 148, cysteine 183, and histidine 186 together coordinate Zn(2+).

Belongs to the thymidine kinase family. As to quaternary structure, homotetramer.

It is found in the cytoplasm. It catalyses the reaction thymidine + ATP = dTMP + ADP + H(+). This Staphylococcus aureus (strain USA300) protein is Thymidine kinase.